Reading from the N-terminus, the 788-residue chain is 5-methyltetrahydropteroyltriglutamate--homocysteine methyltransferase (788 aa).

5-methyltetrahydropteroyltri-L-glutamate-binding positions include 24–27 and K140; that span reads RELK. L-homocysteine contacts are provided by residues 463-465 and E516; that span reads IGS. L-methionine contacts are provided by residues 463-465 and E516; that span reads IGS. 5-methyltetrahydropteroyltri-L-glutamate-binding positions include 547-548 and W593; that span reads RC. Residue D631 participates in L-homocysteine binding. D631 lines the L-methionine pocket. A 5-methyltetrahydropteroyltri-L-glutamate-binding site is contributed by E637. H673, C675, and E697 together coordinate Zn(2+). The active-site Proton donor is the H726. Residue C758 coordinates Zn(2+).

This sequence belongs to the vitamin-B12 independent methionine synthase family. Zn(2+) is required as a cofactor.

The catalysed reaction is 5-methyltetrahydropteroyltri-L-glutamate + L-homocysteine = tetrahydropteroyltri-L-glutamate + L-methionine. It participates in amino-acid biosynthesis; L-methionine biosynthesis via de novo pathway; L-methionine from L-homocysteine (MetE route): step 1/1. Functionally, catalyzes the transfer of a methyl group from 5-methyltetrahydrofolate to homocysteine resulting in methionine formation. The polypeptide is 5-methyltetrahydropteroyltriglutamate--homocysteine methyltransferase (Rhodopseudomonas palustris (strain TIE-1)).